A 688-amino-acid chain; its full sequence is Nucleolar protein 10 (688 aa).

At methionine 1 the chain carries N-acetylmethionine. Position 25 is a phosphoserine (serine 25). 7 WD repeats span residues glutamate 44 to threonine 82, lysine 88 to glutamine 124, phenylalanine 127 to leucine 163, asparagine 170 to proline 205, asparagine 219 to leucine 258, lysine 262 to lysine 300, and lysine 304 to isoleucine 341. The stretch at glutamate 423–leucine 446 forms a coiled coil. Serine 475 carries the post-translational modification Phosphoserine. Phosphothreonine is present on threonine 481. A Phosphoserine modification is found at serine 514. 2 coiled-coil regions span residues serine 514–lysine 589 and serine 640–serine 673. Disordered stretches follow at residues leucine 529–tryptophan 557 and phenylalanine 645–histidine 688. A compositionally biased stretch (basic and acidic residues) spans lysine 648–histidine 663. The span at arginine 664–histidine 688 shows a compositional bias: basic residues.

It belongs to the WD repeat NOL10/ENP2 family.

It localises to the nucleus. The protein localises to the nucleolus. The polypeptide is Nucleolar protein 10 (NOL10) (Homo sapiens (Human)).